We begin with the raw amino-acid sequence, 469 residues long: Ribulose bisphosphate carboxylase large chain (469 aa).

Position 7 is an N6,N6,N6-trimethyllysine (lysine 7). Substrate is bound by residues asparagine 116 and threonine 166. Catalysis depends on lysine 168, which acts as the Proton acceptor. Substrate is bound at residue lysine 170. The Mg(2+) site is built by lysine 194, aspartate 196, and glutamate 197. Lysine 194 bears the N6-carboxylysine mark. Histidine 287 functions as the Proton acceptor in the catalytic mechanism. Substrate is bound by residues arginine 288, histidine 320, and serine 372.

The protein belongs to the RuBisCO large chain family. Type I subfamily. Heterohexadecamer of 8 large chains and 8 small chains; disulfide-linked. The disulfide link is formed within the large subunit homodimers. It depends on Mg(2+) as a cofactor. The disulfide bond which can form in the large chain dimeric partners within the hexadecamer appears to be associated with oxidative stress and protein turnover.

Its subcellular location is the plastid. The protein localises to the chloroplast. The catalysed reaction is 2 (2R)-3-phosphoglycerate + 2 H(+) = D-ribulose 1,5-bisphosphate + CO2 + H2O. It catalyses the reaction D-ribulose 1,5-bisphosphate + O2 = 2-phosphoglycolate + (2R)-3-phosphoglycerate + 2 H(+). Functionally, ruBisCO catalyzes two reactions: the carboxylation of D-ribulose 1,5-bisphosphate, the primary event in carbon dioxide fixation, as well as the oxidative fragmentation of the pentose substrate in the photorespiration process. Both reactions occur simultaneously and in competition at the same active site. In Pachira aquatica (Guiana chestnut), this protein is Ribulose bisphosphate carboxylase large chain.